Consider the following 204-residue polypeptide: Tat proofreading chaperone DmsD (204 aa).

The protein belongs to the TorD/DmsD family. DmsD subfamily.

Its function is as follows. Required for biogenesis/assembly of DMSO reductase, but not for the interaction of the DmsA signal peptide with the Tat system. May be part of a chaperone cascade complex that facilitates a folding-maturation pathway for the substrate protein. The protein is Tat proofreading chaperone DmsD of Salmonella paratyphi A (strain ATCC 9150 / SARB42).